A 331-amino-acid chain; its full sequence is Nucleotide sugar transporter SLC35B4 (331 aa).

Transmembrane regions (helical) follow at residues 4–24 (ALAV…LELL), 30–50 (GCGN…GFLF), 59–79 (PAIP…VSVV), 92–112 (LHMI…IIIL), 117–137 (SIFK…CTFM), 153–173 (GFQA…ALLM), 201–221 (ALPL…AVLF), 229–249 (IPVI…NIIT), 251–267 (YVCI…CASL), 268–288 (TVTL…ILYF), and 291–311 (PFTL…LMYT). A Mediates endoplasmic reticulum retention motif is present at residues 326 to 331 (KDSKKN).

This sequence belongs to the nucleotide-sugar transporter family. SLC35B subfamily.

The protein resides in the endoplasmic reticulum membrane. It catalyses the reaction UDP-N-acetyl-alpha-D-glucosamine(in) + UDP-alpha-D-glucuronate(out) = UDP-N-acetyl-alpha-D-glucosamine(out) + UDP-alpha-D-glucuronate(in). The catalysed reaction is UDP-alpha-D-xylose(in) + UDP-alpha-D-glucuronate(out) = UDP-alpha-D-xylose(out) + UDP-alpha-D-glucuronate(in). Functionally, antiporter that transports nucleotide sugars across the endoplasmic reticulum (ER) membrane in exchange for another nucleotide sugar. May couple UDP-alpha-D-glucuronate (UDP-GlcA) or UDP-alpha-D-xylose (UDP-Xyl) efflux to UDP-alpha-D-glucuronate (UDP-GlcA) influx into the ER lumen, which in turn stimulates glucuronidation and excretion of endobiotics and xenobiotics. Its function is as follows. Has UDP-GlcA:UDP-GlcNAc antiporter activity. The polypeptide is Nucleotide sugar transporter SLC35B4 (SLC35B4) (Homo sapiens (Human)).